A 162-amino-acid chain; its full sequence is NADH-quinone oxidoreductase subunit I (162 aa).

2 4Fe-4S ferredoxin-type domains span residues 52–82 and 93–122; these read LRRYPNGEERCIACKLCEAVCPAQAITIEAG and VRYDIDMVKCIYCGLCQEACPVDAIVEGPN. 8 residues coordinate [4Fe-4S] cluster: C62, C65, C68, C72, C102, C105, C108, and C112.

It belongs to the complex I 23 kDa subunit family. NDH-1 is composed of 14 different subunits. Subunits NuoA, H, J, K, L, M, N constitute the membrane sector of the complex. [4Fe-4S] cluster serves as cofactor.

The protein resides in the cell inner membrane. It carries out the reaction a quinone + NADH + 5 H(+)(in) = a quinol + NAD(+) + 4 H(+)(out). Its function is as follows. NDH-1 shuttles electrons from NADH, via FMN and iron-sulfur (Fe-S) centers, to quinones in the respiratory chain. The immediate electron acceptor for the enzyme in this species is believed to be ubiquinone. Couples the redox reaction to proton translocation (for every two electrons transferred, four hydrogen ions are translocated across the cytoplasmic membrane), and thus conserves the redox energy in a proton gradient. The sequence is that of NADH-quinone oxidoreductase subunit I from Bradyrhizobium sp. (strain ORS 278).